We begin with the raw amino-acid sequence, 304 residues long: MKYPRSLSWEKISSSTISIREFNRFENKKKVAIFCGYVRDKYEFNYHDRTYQWLRNNDYYVILVMPKSGILLESDLCKACDVFIERENFGYDFGSYACGLQYVNLIEGSERIDRLLFVNDSFIGPFGYCNLIEDSSEFWGNTDSNQVKYHYQSYLFGFNLEKVNLDIINNFFFSRGDIYTDDKSLVIENFELSLYEYFNGKGLRCSVLHPISVLKSDFIKQTFHFISYPYLTSKIFFYIMVIARDVNPTHQLWLQLFKRGFPFIKKELLRDNPTGYPELYKKVEEVMGSNDFNGEYKQIFKNHL.

In terms of biological role, could be involved in the biosynthesis of a major surface antigen important for virulence. In Vibrio anguillarum (strain ATCC 68554 / 775) (Listonella anguillarum), this protein is Virulence protein VirA (virA).